Reading from the N-terminus, the 222-residue chain is Adenylate kinase, chloroplastic (222 aa).

15–20 serves as a coordination point for ATP; sequence ASGKGT. Positions 35–64 are NMP; that stretch reads SAGDLLRAEIAAGSENGKRAKEFMEKGQLV. Residues R41, 62 to 64, 91 to 94, and Q98 contribute to the AMP site; these read QLV and GYPR. The LID stretch occupies residues 128–161; sequence GRRLDPVTGKIYHLKYSPPENEEIASRLTQRFDD. R129 is an ATP binding site. Residue R158 coordinates AMP. A195 contacts ATP.

Monomer.

It localises to the plastid. The protein localises to the chloroplast. The enzyme catalyses AMP + ATP = 2 ADP. Its function is as follows. Catalyzes the reversible transfer of the terminal phosphate group between ATP and AMP. Plays an important role in cellular energy homeostasis and in adenine nucleotide metabolism. The maize enzyme also works with CMP, albeit with 10% of the activity with AMP. This is Adenylate kinase, chloroplastic (ADK1) from Zea mays (Maize).